The sequence spans 254 residues: D-aminoacyl-tRNA deacylase (254 aa).

Residues 61-83 (KPTLTVHTPGNLTEDNSHGGNPE) are disordered. Polar residues predominate over residues 65 to 74 (TVHTPGNLTE).

This sequence belongs to the DtdA deacylase family. Monomer. Zn(2+) serves as cofactor.

It carries out the reaction a D-aminoacyl-tRNA + H2O = a tRNA + a D-alpha-amino acid + H(+). It catalyses the reaction glycyl-tRNA(Ala) + H2O = tRNA(Ala) + glycine + H(+). D-aminoacyl-tRNA deacylase with broad substrate specificity. By recycling D-aminoacyl-tRNA to D-amino acids and free tRNA molecules, this enzyme counteracts the toxicity associated with the formation of D-aminoacyl-tRNA entities in vivo. The sequence is that of D-aminoacyl-tRNA deacylase from Methanococcus maripaludis (strain C7 / ATCC BAA-1331).